Consider the following 369-residue polypeptide: Xylene/toluene monooxygenase hydroxylase component XylM (369 aa).

A run of 3 helical transmembrane segments spans residues L8–W28, L60–V80, and L91–V111. Fe cation is bound by residues H113, H117, H143, H147, and H148. Residues V207 to L227 traverse the membrane as a helical segment. The Fe cation site is built by H282, H285, and H286. Residues M305 to I325 form a helical membrane-spanning segment.

The protein belongs to the fatty acid desaturase type 1 family. AlkB subfamily. As to quaternary structure, the xylene/toluene monooxygenase is composed of two subunits: the electron transfer component XylA and the hydroxylase component XylM. The cofactor is Fe(2+).

It is found in the cell inner membrane. The catalysed reaction is m-xylene + 2 reduced [2Fe-2S]-[ferredoxin] + O2 + 2 H(+) = 3-methylbenzyl alcohol + 2 oxidized [2Fe-2S]-[ferredoxin] + H2O. The enzyme catalyses p-xylene + 2 reduced [2Fe-2S]-[ferredoxin] + O2 + 2 H(+) = 4-methylbenzyl alcohol + 2 oxidized [2Fe-2S]-[ferredoxin] + H2O. It carries out the reaction toluene + 2 reduced [2Fe-2S]-[ferredoxin] + O2 + 2 H(+) = benzyl alcohol + 2 oxidized [2Fe-2S]-[ferredoxin] + H2O. Functionally, component of a monooxygenase that catalyzes the first step in the degradation of xylenes and toluenes. XylM catalyzes the hydroxylation of the methyl side chain of xylenes and toluenes. The electrons are provided by the electron transfer component XylA. The best substrates are m-xylene and p-xylene, followed by toluene. Shows weak activity with o-xylene. In vitro, is also active with substituted compounds, such as chlorotoluenes. Cannot use benzyl alcohol. This Pseudomonas putida (Arthrobacter siderocapsulatus) protein is Xylene/toluene monooxygenase hydroxylase component XylM.